Here is a 358-residue protein sequence, read N- to C-terminus: Plastoglobulin-1, chloroplastic (358 aa).

A chloroplast-targeting transit peptide spans 1–47; that stretch reads MALLSSTLRAPLVFSKNPKPVSLSSLHSRIYLSPRSPRFPSLRFISA. The tract at residues 48–114 is disordered; sequence AGDTGDAEKP…NDAGNGTPTF (67 aa).

Belongs to the PAP/fibrillin family.

It is found in the plastid. Its subcellular location is the chloroplast. Functionally, may form together with other plastoglobulins a coat on the surface of the lipoprotein particle. The coat may contain receptors for attachment to the thylakoid membrane as well as regulatory proteins that may function in the transfer of lipids to and from the thylakoid membranes. The chain is Plastoglobulin-1, chloroplastic (PG1) from Pisum sativum (Garden pea).